The primary structure comprises 342 residues: Serpentine receptor class gamma-69 (342 aa).

7 consecutive transmembrane segments (helical) span residues 11-31 (MAGLIGIYAFQGFYGLLSVVV), 51-71 (SLLYTCCAALSLTYFLDHFLI), 106-126 (PIAILVFHALIAAHRFSIVAA), 140-160 (LFVLVGFLIPLIFMWFMIPCK), 191-211 (IAAVLFGVLTLCLTFGMLIAL), 222-242 (AEISLIVFEVFMTVFTLIYAF), and 269-289 (FAIDIFILPQAWTLLFLSTTV).

This sequence belongs to the nematode receptor-like protein srg family.

The protein localises to the membrane. The polypeptide is Serpentine receptor class gamma-69 (srg-69) (Caenorhabditis elegans).